Consider the following 138-residue polypeptide: MLQPARRKFRKEQKGRNTGVATRGNSVAFGDFGLKCTDRGRLTARQIEAARRAISRHVKRGGRIWIRVFPDKPISTKPAEVRMGNGKGNPEYYVAEIQPGKVVFEIVGVPEELAREAFRLAAAKLPLRTTFVARQIGA.

Residues 1–13 show a composition bias toward basic residues; sequence MLQPARRKFRKEQ. The segment at 1 to 22 is disordered; it reads MLQPARRKFRKEQKGRNTGVAT.

The protein belongs to the universal ribosomal protein uL16 family. As to quaternary structure, part of the 50S ribosomal subunit.

Functionally, binds 23S rRNA and is also seen to make contacts with the A and possibly P site tRNAs. This is Large ribosomal subunit protein uL16 from Acidovorax ebreus (strain TPSY) (Diaphorobacter sp. (strain TPSY)).